Consider the following 68-residue polypeptide: Large ribosomal subunit protein bL33c (68 aa).

It belongs to the bacterial ribosomal protein bL33 family.

It is found in the plastid. It localises to the chloroplast. The sequence is that of Large ribosomal subunit protein bL33c from Amborella trichopoda.